A 256-amino-acid polypeptide reads, in one-letter code: DNA repair protein RecO (256 aa).

This sequence belongs to the RecO family.

Involved in DNA repair and RecF pathway recombination. The protein is DNA repair protein RecO of Thiobacillus denitrificans (strain ATCC 25259 / T1).